Consider the following 142-residue polypeptide: Transcriptional regulator MraZ (142 aa).

2 consecutive SpoVT-AbrB domains span residues glutamate 5 to glutamate 48 and alanine 77 to threonine 120.

The protein belongs to the MraZ family. In terms of assembly, forms oligomers.

It is found in the cytoplasm. The protein resides in the nucleoid. The sequence is that of Transcriptional regulator MraZ from Dehalococcoides mccartyi (strain ATCC BAA-2266 / KCTC 15142 / 195) (Dehalococcoides ethenogenes (strain 195)).